A 373-amino-acid chain; its full sequence is MRVDLFDFDLPDERIALRPAEPRDSARLLVVNPHAESGPHAESVPHAESALSDHHVYDLPSFLRAGDALVFNDTKVIPAQLEGIRHRDGAGGQQVSATLHMRIGPSRWKAFAKPGKRIKEGDRIAFGHSGESCFLGALDATVEEKGEAGEVTLAFDLTGPALDEAIAAVGHIPLPPYIAAKRPEDERDRADYQTIYAREEGAVAAPTAGLHFTPDLFAALDKAGIERHFVTLHVGAGTFLPVKADDTDDHKMHLESGYVSAEIAARLNAVKARGGRIVCVGTTSLRLIESAAGEDGKIKPWAGATGIFITPGYRFKAVDMLMTNFHLPRSTLFMLVSAFSGFETMRAAYEHAISTGYRFYSYGDASLLFRKDK.

It belongs to the QueA family. As to quaternary structure, monomer.

It is found in the cytoplasm. The catalysed reaction is 7-aminomethyl-7-carbaguanosine(34) in tRNA + S-adenosyl-L-methionine = epoxyqueuosine(34) in tRNA + adenine + L-methionine + 2 H(+). Its pathway is tRNA modification; tRNA-queuosine biosynthesis. In terms of biological role, transfers and isomerizes the ribose moiety from AdoMet to the 7-aminomethyl group of 7-deazaguanine (preQ1-tRNA) to give epoxyqueuosine (oQ-tRNA). In Rhizobium etli (strain CIAT 652), this protein is S-adenosylmethionine:tRNA ribosyltransferase-isomerase.